The sequence spans 123 residues: Large ribosomal subunit protein bL12 (123 aa).

This sequence belongs to the bacterial ribosomal protein bL12 family. In terms of assembly, homodimer. Part of the ribosomal stalk of the 50S ribosomal subunit. Forms a multimeric L10(L12)X complex, where L10 forms an elongated spine to which 2 to 4 L12 dimers bind in a sequential fashion. Binds GTP-bound translation factors.

In terms of biological role, forms part of the ribosomal stalk which helps the ribosome interact with GTP-bound translation factors. Is thus essential for accurate translation. This Bacillus licheniformis (strain ATCC 14580 / DSM 13 / JCM 2505 / CCUG 7422 / NBRC 12200 / NCIMB 9375 / NCTC 10341 / NRRL NRS-1264 / Gibson 46) protein is Large ribosomal subunit protein bL12.